Here is a 453-residue protein sequence, read N- to C-terminus: Jacalin-related lectin 40 (453 aa).

3 Jacalin-type lectin domains span residues 1-142 (MAQK…YFTT), 154-296 (HIKL…YFSS), and 306-449 (PEKL…YVVP). An N-acetylalanine modification is found at A2.

The protein belongs to the jacalin lectin family. As to expression, expressed in roots.

The sequence is that of Jacalin-related lectin 40 (JAL40) from Arabidopsis thaliana (Mouse-ear cress).